The sequence spans 1135 residues: Potassium channel subfamily T member 2 (1135 aa).

Residues 1–63 (MVDLESEVPP…KNQRSSLRIR (63 aa)) are Cytoplasmic-facing. The helical transmembrane segment at 64–84 (LFNFSLKLLSCLLYIIRVLLE) threads the bilayer. The Extracellular segment spans residues 85 to 101 (NPSQGNEWSHIFWVNRS). The N-linked (GlcNAc...) asparagine glycan is linked to N99. A helical membrane pass occupies residues 102–122 (LPLWGLQVSVALISLFETILL). Over 123–137 (GYLSYKGNIWEQILR) the chain is Cytoplasmic. Residues 138–158 (IPFILEIINAVPFIISIFWPS) traverse the membrane as a helical segment. The Extracellular portion of the chain corresponds to 159-164 (LRNLFV). A helical transmembrane segment spans residues 165–185 (PVFLNCWLAKHALENMINDLH). At 186–198 (RAIQRTQSAMFNQ) the chain is on the cytoplasmic side. Residues 199 to 219 (VLILISTLLCLIFTCICGIQH) form a helical membrane-spanning segment. The Extracellular segment spans residues 220–228 (LERIGKKLN). Residues 229-249 (LFDSLYFCIVTFSTVGFGDVT) constitute an intramembrane region (pore-forming). Residues 250 to 256 (PETWSSK) are Extracellular-facing. The helical transmembrane segment at 257 to 277 (LFVVAMICVALVVLPIQFEQL) threads the bilayer. The Cytoplasmic segment spans residues 278–1135 (AYLWMERQKS…GQDSREETQL (858 aa)). RCK N-terminal domains are found at residues 299 to 435 (EKHV…DHVV) and 718 to 858 (NKLI…CYSL). Disordered stretches follow at residues 977 to 1010 (VEEW…HPLL), 1017 to 1036 (WARR…AEKI), and 1113 to 1135 (SEPS…ETQL). The span at 1017-1030 (WARRLSRKGPKHSG) shows a compositional bias: basic residues. Polar residues predominate over residues 1118-1127 (RNSICNVTGQ).

It belongs to the potassium channel family. Calcium-activated (TC 1.A.1.3) subfamily. KCa4.2/KCNT2 sub-subfamily. In terms of assembly, homotetramer. Forms heteromeric channels with KCNT1; these heterodimer channels differ from the homomers in their unitary conductance, kinetic behavior, subcellular localization, and response to activation of protein kinase C. In terms of processing, phosphorylated by protein kinase C. Phosphorylation of the C-terminal domain inhibits channel activity.

It localises to the cell membrane. The catalysed reaction is K(+)(in) = K(+)(out). Are normally in a closed state unless activated by an increase in intracellular Na(+) and Cl(-). Inhibited upon stimulation of G-protein coupled receptors, such as CHRM1 and GRM1. There is conflicting data about the effect of ATP on KNCT2 channels activity. Intracellular ATP was initially report to inhibit the channel activity. However, others studies conclude that KNCT2 channels are not inhibited by intracellular ATP. Sodium-activated and chloride-activated potassium channel. Produces rapidly activating outward rectifier K(+) currents. Contributes to regulate neuronal excitability. This Homo sapiens (Human) protein is Potassium channel subfamily T member 2 (KCNT2).